A 66-amino-acid chain; its full sequence is Large ribosomal subunit protein bL35 (66 aa).

The disordered stretch occupies residues 20–41; sequence GKVMSAQRGKRHGMIKRTKKQI. The span at 27-41 shows a compositional bias: basic residues; the sequence is RGKRHGMIKRTKKQI.

It belongs to the bacterial ribosomal protein bL35 family.

This is Large ribosomal subunit protein bL35 from Rhodopseudomonas palustris (strain BisB5).